The primary structure comprises 274 residues: Rhamnulose-1-phosphate aldolase (274 aa).

Glutamate 117 is a catalytic residue. Residues histidine 141, histidine 143, and histidine 212 each coordinate Zn(2+).

The protein belongs to the aldolase class II family. RhaD subfamily. In terms of assembly, homotetramer. It depends on Zn(2+) as a cofactor.

The protein localises to the cytoplasm. The enzyme catalyses L-rhamnulose 1-phosphate = (S)-lactaldehyde + dihydroxyacetone phosphate. It participates in carbohydrate degradation; L-rhamnose degradation; glycerone phosphate from L-rhamnose: step 3/3. In terms of biological role, catalyzes the reversible cleavage of L-rhamnulose-1-phosphate to dihydroxyacetone phosphate (DHAP) and L-lactaldehyde. The protein is Rhamnulose-1-phosphate aldolase of Yersinia pseudotuberculosis serotype I (strain IP32953).